The sequence spans 129 residues: Small ribosomal subunit protein uS11 (129 aa).

Belongs to the universal ribosomal protein uS11 family. Part of the 30S ribosomal subunit. Interacts with proteins S7 and S18. Binds to IF-3.

Its function is as follows. Located on the platform of the 30S subunit, it bridges several disparate RNA helices of the 16S rRNA. Forms part of the Shine-Dalgarno cleft in the 70S ribosome. In Maridesulfovibrio salexigens (strain ATCC 14822 / DSM 2638 / NCIMB 8403 / VKM B-1763) (Desulfovibrio salexigens), this protein is Small ribosomal subunit protein uS11.